Here is a 240-residue protein sequence, read N- to C-terminus: Ribonuclease PH (240 aa).

Residues Arg87 and 125–127 (GTR) each bind phosphate.

The protein belongs to the RNase PH family. Homohexameric ring arranged as a trimer of dimers.

It carries out the reaction tRNA(n+1) + phosphate = tRNA(n) + a ribonucleoside 5'-diphosphate. Phosphorolytic 3'-5' exoribonuclease that plays an important role in tRNA 3'-end maturation. Removes nucleotide residues following the 3'-CCA terminus of tRNAs; can also add nucleotides to the ends of RNA molecules by using nucleoside diphosphates as substrates, but this may not be physiologically important. Probably plays a role in initiation of 16S rRNA degradation (leading to ribosome degradation) during starvation. This is Ribonuclease PH from Pseudomonas fluorescens (strain ATCC BAA-477 / NRRL B-23932 / Pf-5).